The primary structure comprises 64 residues: Temporin-ALh (64 aa).

The first 22 residues, 1-22, serve as a signal peptide directing secretion; sequence MFPLKKSLLLLFFLATINLSLC. A propeptide spanning residues 23–46 is cleaved from the precursor; it reads EQERNAEEERRDEPDERNAEVEKR. Ser62 carries the serine amide modification.

This sequence belongs to the frog skin active peptide (FSAP) family. Temporin subfamily. In terms of tissue distribution, expressed by the skin glands.

It is found in the secreted. Its function is as follows. Antimicrobial peptide with activity against Gram-positive and Gram-negative bacteria and against fungi. Has been tested against S.aureus (MIC=2.5 ug/mL), B.pumilus (MIC=7.5 ug/mL), B.cereus (MIC=75.0 ug/mL), E.coli (MIC=5.0 ug/mL), B.dysenteriae (MIC=20.0 ug/mL), A.cacoaceticus (MIC=60.0 ug/mL), P.aeruginosa (MIC=2.5 ug/mL) and C.albicans (MIC=2.5 ug/mL). Also shows a weak hemolytic activity. This is Temporin-ALh from Amolops loloensis (Lolokou Sucker Frog).